The primary structure comprises 229 residues: Lipoprotein-releasing system ATP-binding protein LolD (229 aa).

Residues 6-229 form the ABC transporter domain; sequence LELDAIERTY…DGHLTPYVPA (224 aa). Residue 42–49 coordinates ATP; it reads GPSGSGKS.

It belongs to the ABC transporter superfamily. Lipoprotein translocase (TC 3.A.1.125) family. As to quaternary structure, the complex is composed of two ATP-binding proteins (LolD) and two transmembrane proteins (LolC and LolE).

It localises to the cell inner membrane. In terms of biological role, part of the ABC transporter complex LolCDE involved in the translocation of mature outer membrane-directed lipoproteins, from the inner membrane to the periplasmic chaperone, LolA. Responsible for the formation of the LolA-lipoprotein complex in an ATP-dependent manner. The polypeptide is Lipoprotein-releasing system ATP-binding protein LolD (Maricaulis maris (strain MCS10) (Caulobacter maris)).